We begin with the raw amino-acid sequence, 75 residues long: Small ribosomal subunit protein bS18 (75 aa).

It belongs to the bacterial ribosomal protein bS18 family. In terms of assembly, part of the 30S ribosomal subunit. Forms a tight heterodimer with protein bS6.

Its function is as follows. Binds as a heterodimer with protein bS6 to the central domain of the 16S rRNA, where it helps stabilize the platform of the 30S subunit. This chain is Small ribosomal subunit protein bS18, found in Baumannia cicadellinicola subsp. Homalodisca coagulata.